A 170-amino-acid chain; its full sequence is Adenine phosphoribosyltransferase (170 aa).

This sequence belongs to the purine/pyrimidine phosphoribosyltransferase family. In terms of assembly, homodimer.

The protein resides in the cytoplasm. The catalysed reaction is AMP + diphosphate = 5-phospho-alpha-D-ribose 1-diphosphate + adenine. The protein operates within purine metabolism; AMP biosynthesis via salvage pathway; AMP from adenine: step 1/1. Catalyzes a salvage reaction resulting in the formation of AMP, that is energically less costly than de novo synthesis. This chain is Adenine phosphoribosyltransferase, found in Enterococcus faecalis (strain ATCC 700802 / V583).